The sequence spans 376 residues: Multiphosphoryl transfer protein (376 aa).

The PTS EIIA type-2 domain occupies 2 to 142 (FQLSVQDIHP…EELRALLMGE (141 aa)). Residue His62 is the Tele-phosphohistidine intermediate; for EIIA activity of the active site. His62 is modified (phosphohistidine; by HPr). The interval 156 to 284 (TLDVIASSLV…LTSDDALTDD (129 aa)) is m domain. The 91-residue stretch at 285 to 375 (VLSAEFVVRN…DAIAAGLGEG (91 aa)) folds into the HPr domain. His299 functions as the Pros-phosphohistidine intermediate; for HPr activity in the catalytic mechanism. Phosphohistidine; by EI is present on His299.

The protein resides in the cytoplasm. In terms of biological role, the phosphoenolpyruvate-dependent sugar phosphotransferase system (sugar PTS), a major carbohydrate active transport system, catalyzes the phosphorylation of incoming sugar substrates concomitantly with their translocation across the cell membrane. The enzyme II FruAB PTS system is involved in fructose transport. The protein is Multiphosphoryl transfer protein (fruB) of Salmonella typhimurium (strain LT2 / SGSC1412 / ATCC 700720).